The sequence spans 206 residues: Proteasome subunit beta 1 (206 aa).

Positions 1–5 (MLMKG) are cleaved as a propeptide — removed in mature form; by autocatalysis. Thr-6 functions as the Nucleophile in the catalytic mechanism.

It belongs to the peptidase T1B family. In terms of assembly, the 20S proteasome core is composed of 14 alpha and 14 beta subunits that assemble into four stacked heptameric rings, resulting in a barrel-shaped structure. The two inner rings, each composed of seven catalytic beta subunits, are sandwiched by two outer rings, each composed of seven alpha subunits. The catalytic chamber with the active sites is on the inside of the barrel. Has a gated structure, the ends of the cylinder being occluded by the N-termini of the alpha-subunits. Is capped at one or both ends by the proteasome regulatory ATPase, PAN.

It localises to the cytoplasm. It catalyses the reaction Cleavage of peptide bonds with very broad specificity.. Its activity is regulated as follows. The formation of the proteasomal ATPase PAN-20S proteasome complex, via the docking of the C-termini of PAN into the intersubunit pockets in the alpha-rings, triggers opening of the gate for substrate entry. Interconversion between the open-gate and close-gate conformations leads to a dynamic regulation of the 20S proteasome proteolysis activity. Component of the proteasome core, a large protease complex with broad specificity involved in protein degradation. The sequence is that of Proteasome subunit beta 1 from Korarchaeum cryptofilum (strain OPF8).